A 338-amino-acid polypeptide reads, in one-letter code: MKSVGINGYGTIGKRVADAVSAQDDMKIVGVTKRSPDFEARMAVEKGYDLYISAPERENSFEEAGIKVTGTAEELFEKLDIVVDCTPEGIGAKNKEGTYEKMGLKATFQGGEKHDQIGLSFNSFSNYKDVIGKDYARVVSCNTTGLCRTLNPINDLCGIKKVRAVMVRRGADPSQVKKGPINAIVPNPPTVPSHHGPDVQTVMYDLNITTMALLVPTTLMHQHNLMVELESSVSIDDIKDKLNETPRVLLLKAKEGLGSTAEFMEYAKELGRSRNDLFEIGVWEESLNIVDGELYYMQAIHQESDVVPENVDAIRAMLEMEDNPSKSIEKTNKAMGIL.

Residues 11 to 12 (TI) and Gly111 contribute to the NAD(+) site. A D-glyceraldehyde 3-phosphate-binding site is contributed by 140–142 (SCN). The active-site Nucleophile is the Cys141. Arg169 is a binding site for NAD(+). 195–196 (HG) is a binding site for D-glyceraldehyde 3-phosphate. Gln302 is a binding site for NAD(+).

Belongs to the glyceraldehyde-3-phosphate dehydrogenase family. In terms of assembly, homotetramer.

The protein resides in the cytoplasm. It catalyses the reaction D-glyceraldehyde 3-phosphate + phosphate + NADP(+) = (2R)-3-phospho-glyceroyl phosphate + NADPH + H(+). The catalysed reaction is D-glyceraldehyde 3-phosphate + phosphate + NAD(+) = (2R)-3-phospho-glyceroyl phosphate + NADH + H(+). Its pathway is carbohydrate degradation; glycolysis; pyruvate from D-glyceraldehyde 3-phosphate: step 1/5. The chain is Glyceraldehyde-3-phosphate dehydrogenase (gap) from Methanobacterium formicicum.